The sequence spans 172 residues: MAGIGRKIASYVGIVDDRRYDEEDLPDEELTTEVYSDDGYEPSSEVTQLHHHDSNEQHARGHKAVQHRRRSELEEPSIADINRILTVHPRNYNEARTIGEQFREGIPVIMNLTEMDDADAKRLVDFAAGLIFGLRGTIERVTSKVFLLCPRNVNVTPEDKARIASGGFFNQS.

The interval 18 to 73 is disordered; sequence RRYDEEDLPDEELTTEVYSDDGYEPSSEVTQLHHHDSNEQHARGHKAVQHRRRSEL. A compositionally biased stretch (acidic residues) spans 22 to 40; it reads EEDLPDEELTTEVYSDDGY. A compositionally biased stretch (basic and acidic residues) spans 48–59; the sequence is QLHHHDSNEQHA. A compositionally biased stretch (basic residues) spans 60–70; it reads RGHKAVQHRRR.

The protein belongs to the SepF family. In terms of assembly, homodimer. Interacts with FtsZ.

The protein localises to the cytoplasm. Cell division protein that is part of the divisome complex and is recruited early to the Z-ring. Probably stimulates Z-ring formation, perhaps through the cross-linking of FtsZ protofilaments. Its function overlaps with FtsA. The protein is Cell division protein SepF of Cutibacterium acnes (strain DSM 16379 / KPA171202) (Propionibacterium acnes).